The sequence spans 296 residues: 4-diphosphocytidyl-2-C-methyl-D-erythritol kinase (296 aa).

Lys14 is an active-site residue. An ATP-binding site is contributed by 97 to 107; the sequence is PMGAGMGGGSS. Residue Asp139 is part of the active site.

It belongs to the GHMP kinase family. IspE subfamily.

It carries out the reaction 4-CDP-2-C-methyl-D-erythritol + ATP = 4-CDP-2-C-methyl-D-erythritol 2-phosphate + ADP + H(+). The protein operates within isoprenoid biosynthesis; isopentenyl diphosphate biosynthesis via DXP pathway; isopentenyl diphosphate from 1-deoxy-D-xylulose 5-phosphate: step 3/6. Functionally, catalyzes the phosphorylation of the position 2 hydroxy group of 4-diphosphocytidyl-2C-methyl-D-erythritol. The polypeptide is 4-diphosphocytidyl-2-C-methyl-D-erythritol kinase (Polynucleobacter necessarius subsp. necessarius (strain STIR1)).